The primary structure comprises 87 residues: Probable Fe(2+)-trafficking protein (87 aa).

The protein belongs to the Fe(2+)-trafficking protein family.

In terms of biological role, could be a mediator in iron transactions between iron acquisition and iron-requiring processes, such as synthesis and/or repair of Fe-S clusters in biosynthetic enzymes. In Francisella philomiragia subsp. philomiragia (strain ATCC 25017 / CCUG 19701 / FSC 153 / O#319-036), this protein is Probable Fe(2+)-trafficking protein.